We begin with the raw amino-acid sequence, 344 residues long: L-rhamnose-proton symporter (344 aa).

The next 10 membrane-spanning stretches (helical) occupy residues 4-24, 38-58, 68-88, 101-121, 137-157, 175-195, 214-234, 259-279, 290-310, and 323-343; these read AITM…CFYA, WSVG…ALLL, FSLS…IGNI, MGIG…TPII, TLLG…AGQL, LVLA…MNAA, LPSY…FCFI, VLLS…YAWG, ISWM…GLVL, and VLSL…IGMA.

The protein belongs to the L-rhamnose transporter (TC 2.A.7.6) family.

It is found in the cell inner membrane. The catalysed reaction is L-rhamnopyranose(in) + H(+)(in) = L-rhamnopyranose(out) + H(+)(out). Uptake of L-rhamnose across the cytoplasmic membrane with the concomitant transport of protons into the cell (symport system). This is L-rhamnose-proton symporter from Shigella sonnei (strain Ss046).